Here is a 436-residue protein sequence, read N- to C-terminus: GTPase Der (436 aa).

2 consecutive EngA-type G domains span residues 4–167 and 175–351; these read PTVA…PVEE and IRFS…ESQN. GTP contacts are provided by residues 10 to 17, 57 to 61, 119 to 122, 181 to 188, 229 to 233, and 294 to 297; these read GRPNVGKS, DTGGI, NKVD, DTAGM, and NKWD. Residues 352–436 form the KH-like domain; the sequence is KRIPSAVLND…PINLIARKRK (85 aa).

This sequence belongs to the TRAFAC class TrmE-Era-EngA-EngB-Septin-like GTPase superfamily. EngA (Der) GTPase family. Associates with the 50S ribosomal subunit.

Its function is as follows. GTPase that plays an essential role in the late steps of ribosome biogenesis. The chain is GTPase Der from Streptococcus agalactiae serotype Ia (strain ATCC 27591 / A909 / CDC SS700).